The primary structure comprises 273 residues: Glutamate racemase (273 aa).

Substrate is bound by residues 11–12 and 43–44; these read DS and YG. Cysteine 74 (proton donor/acceptor) is an active-site residue. 75–76 is a binding site for substrate; it reads NT. Residue cysteine 185 is the Proton donor/acceptor of the active site. Residue 186–187 participates in substrate binding; it reads TH.

The protein belongs to the aspartate/glutamate racemases family. In terms of assembly, homodimer.

The enzyme catalyses L-glutamate = D-glutamate. It functions in the pathway cell wall biogenesis; peptidoglycan biosynthesis. In terms of biological role, provides the (R)-glutamate required for cell wall biosynthesis. This chain is Glutamate racemase, found in Enterococcus faecalis (strain ATCC 700802 / V583).